A 110-amino-acid chain; its full sequence is Inner membrane protein YgiZ (110 aa).

At 1–8 the chain is on the cytoplasmic side; sequence MLKQKIKT. Residues 9 to 29 form a helical membrane-spanning segment; sequence IFEALLYIMLTYWLIDSFFAF. Over 30-53 the chain is Periplasmic; sequence NKYDWMLESGGNICSIPSVSGEDR. A helical transmembrane segment spans residues 54 to 74; the sequence is ILQAMIAAFFLLTPLIILILR. At 75–83 the chain is on the cytoplasmic side; sequence KLFMREMFE. The chain crosses the membrane as a helical span at residues 84-104; that stretch reads FWVYVFSLGICLVCGWWLFWG. The Periplasmic portion of the chain corresponds to 105-110; it reads RFIFCY.

It localises to the cell inner membrane. This is Inner membrane protein YgiZ (ygiZ) from Escherichia coli (strain K12).